A 196-amino-acid chain; its full sequence is MLFRYLVWLFRFIEVKNVVSISLLVIGSNYLTTAISNNTSTTISPTTSSNYLLTAISNNTSTTILPTTTSSNYLTSAIPNIISDKEDDTPFSTDKTVSDGLSPITLYRAIRSTLNDTMTDILTRPYRPTTVIFHSDTPQPVKNATQGNIIKKTYRQVLTFFIQPNPLFPCFKNHEVFLNLANILNTILCIILIKNV.

2 tandem repeats follow at residues 28 to 48 (SNYL…PTTS) and 49 to 70 (SNYL…TTTS). One copy of the 3; approximate repeat lies at 71-92 (SNYLTSAIPNIISDKEDDTPFS).

This sequence belongs to the asfivirus I196L family.

The chain is Late protein I196L from African swine fever virus (strain Badajoz 1971 Vero-adapted) (Ba71V).